The chain runs to 214 residues: Probable chorismate pyruvate-lyase (214 aa).

Substrate is bound by residues Arg74, Leu112, and Glu173. A disordered region spans residues 183 to 214 (AAPENTGAGGTRLPRRIDTHHTPSKQEERPES). Positions 197 to 214 (RRIDTHHTPSKQEERPES) are enriched in basic and acidic residues.

The protein belongs to the UbiC family.

The protein resides in the cytoplasm. The catalysed reaction is chorismate = 4-hydroxybenzoate + pyruvate. The protein operates within cofactor biosynthesis; ubiquinone biosynthesis. Removes the pyruvyl group from chorismate, with concomitant aromatization of the ring, to provide 4-hydroxybenzoate (4HB) for the ubiquinone pathway. This chain is Probable chorismate pyruvate-lyase, found in Cupriavidus metallidurans (strain ATCC 43123 / DSM 2839 / NBRC 102507 / CH34) (Ralstonia metallidurans).